We begin with the raw amino-acid sequence, 85 residues long: Large ribosomal subunit protein bL27 (85 aa).

It belongs to the bacterial ribosomal protein bL27 family.

This chain is Large ribosomal subunit protein bL27, found in Ruthia magnifica subsp. Calyptogena magnifica.